Consider the following 161-residue polypeptide: 3-isopropylmalate dehydratase small subunit (161 aa).

It belongs to the LeuD family. LeuD type 2 subfamily. As to quaternary structure, heterodimer of LeuC and LeuD.

The enzyme catalyses (2R,3S)-3-isopropylmalate = (2S)-2-isopropylmalate. Its pathway is amino-acid biosynthesis; L-leucine biosynthesis; L-leucine from 3-methyl-2-oxobutanoate: step 2/4. In terms of biological role, catalyzes the isomerization between 2-isopropylmalate and 3-isopropylmalate, via the formation of 2-isopropylmaleate. The polypeptide is 3-isopropylmalate dehydratase small subunit (leuD) (Caldanaerobacter subterraneus subsp. tengcongensis (strain DSM 15242 / JCM 11007 / NBRC 100824 / MB4) (Thermoanaerobacter tengcongensis)).